We begin with the raw amino-acid sequence, 78 residues long: NAD(P)H-quinone oxidoreductase subunit O (78 aa).

It belongs to the complex I NdhO subunit family. NDH-1 can be composed of about 15 different subunits; different subcomplexes with different compositions have been identified which probably have different functions.

It is found in the cellular thylakoid membrane. It catalyses the reaction a plastoquinone + NADH + (n+1) H(+)(in) = a plastoquinol + NAD(+) + n H(+)(out). The catalysed reaction is a plastoquinone + NADPH + (n+1) H(+)(in) = a plastoquinol + NADP(+) + n H(+)(out). Functionally, NDH-1 shuttles electrons from an unknown electron donor, via FMN and iron-sulfur (Fe-S) centers, to quinones in the respiratory and/or the photosynthetic chain. The immediate electron acceptor for the enzyme in this species is believed to be plastoquinone. Couples the redox reaction to proton translocation, and thus conserves the redox energy in a proton gradient. Cyanobacterial NDH-1 also plays a role in inorganic carbon-concentration. The sequence is that of NAD(P)H-quinone oxidoreductase subunit O from Prochlorococcus marinus (strain MIT 9215).